A 178-amino-acid polypeptide reads, in one-letter code: SCAN domain-containing protein 1 (178 aa).

The disordered stretch occupies residues 1–107 (MAATEQSLAP…GSRPGPETFR (107 aa)). The span at 9 to 18 (APAGSSAPPS) shows a compositional bias: low complexity. The span at 36–54 (GSSSTPEAPSIPDSSNPSA) shows a compositional bias: polar residues. An SCAN box domain is found at 107 to 178 (RQRFRQFRYQ…RRRTDVRITG (72 aa)).

Interacts with ZNF202.

The protein localises to the nucleus. Functionally, may regulate transcriptional activity. The protein is SCAN domain-containing protein 1 (SCAND1) of Bos taurus (Bovine).